Here is a 110-residue protein sequence, read N- to C-terminus: Protein RALF-like 4 (110 aa).

Residues 1–23 (MGVKMLLIFGLLILAMVAKSVNA) form the signal peptide. Positions 24–58 (TYPLTKSCINGQGCIGEDDELESLMDSETNRRQLA) are cleaved as a propeptide — removed in mature form. 2 disulfides stabilise this stretch: Cys-76–Cys-86 and Cys-99–Cys-105.

It belongs to the plant rapid alkalinization factor (RALF) family. Post-translationally, proteolytically cleaved, probably by S1P, a subtilisin-like serine protease (subtilase).

It localises to the secreted. Cell signaling peptide that may regulate plant stress, growth, and development. Mediates a rapid alkalinization of extracellular space by mediating a transient increase in the cytoplasmic Ca(2+) concentration leading to a calcium-dependent signaling events through a cell surface receptor and a concomitant activation of some intracellular mitogen-activated protein kinases. This is Protein RALF-like 4 (RALFL4) from Arabidopsis thaliana (Mouse-ear cress).